A 211-amino-acid chain; its full sequence is Thiamine-phosphate synthase (211 aa).

Residues 37-41 (QLRIK) and N69 contribute to the 4-amino-2-methyl-5-(diphosphooxymethyl)pyrimidine site. The Mg(2+) site is built by D70 and D89. A 4-amino-2-methyl-5-(diphosphooxymethyl)pyrimidine-binding site is contributed by S108. 134–136 (TQT) contacts 2-[(2R,5Z)-2-carboxy-4-methylthiazol-5(2H)-ylidene]ethyl phosphate. Residue K137 participates in 4-amino-2-methyl-5-(diphosphooxymethyl)pyrimidine binding. Residues G166 and 186–187 (VS) contribute to the 2-[(2R,5Z)-2-carboxy-4-methylthiazol-5(2H)-ylidene]ethyl phosphate site.

It belongs to the thiamine-phosphate synthase family. Mg(2+) serves as cofactor.

The enzyme catalyses 2-[(2R,5Z)-2-carboxy-4-methylthiazol-5(2H)-ylidene]ethyl phosphate + 4-amino-2-methyl-5-(diphosphooxymethyl)pyrimidine + 2 H(+) = thiamine phosphate + CO2 + diphosphate. The catalysed reaction is 2-(2-carboxy-4-methylthiazol-5-yl)ethyl phosphate + 4-amino-2-methyl-5-(diphosphooxymethyl)pyrimidine + 2 H(+) = thiamine phosphate + CO2 + diphosphate. It carries out the reaction 4-methyl-5-(2-phosphooxyethyl)-thiazole + 4-amino-2-methyl-5-(diphosphooxymethyl)pyrimidine + H(+) = thiamine phosphate + diphosphate. The protein operates within cofactor biosynthesis; thiamine diphosphate biosynthesis; thiamine phosphate from 4-amino-2-methyl-5-diphosphomethylpyrimidine and 4-methyl-5-(2-phosphoethyl)-thiazole: step 1/1. Its function is as follows. Condenses 4-methyl-5-(beta-hydroxyethyl)thiazole monophosphate (THZ-P) and 2-methyl-4-amino-5-hydroxymethyl pyrimidine pyrophosphate (HMP-PP) to form thiamine monophosphate (TMP). The sequence is that of Thiamine-phosphate synthase from Escherichia coli O139:H28 (strain E24377A / ETEC).